A 231-amino-acid chain; its full sequence is NADH-ubiquinone oxidoreductase chain 4 (231 aa).

A run of 6 helical transmembrane segments spans residues 1–21 (PIAG…YGII), 34–54 (MFLP…LTCL), 61–80 (SLIA…AIII), 85–107 (GLAG…FCLA), 128–148 (ILPM…AIPP), and 169–189 (TIIL…HMFL).

Belongs to the complex I subunit 4 family.

The protein localises to the mitochondrion membrane. It carries out the reaction a ubiquinone + NADH + 5 H(+)(in) = a ubiquinol + NAD(+) + 4 H(+)(out). Its function is as follows. Core subunit of the mitochondrial membrane respiratory chain NADH dehydrogenase (Complex I) that is believed to belong to the minimal assembly required for catalysis. Complex I functions in the transfer of electrons from NADH to the respiratory chain. The immediate electron acceptor for the enzyme is believed to be ubiquinone. This is NADH-ubiquinone oxidoreductase chain 4 (MT-ND4) from Gloydius blomhoffii (Mamushi).